The chain runs to 717 residues: Fatty acid oxidation complex subunit alpha (717 aa).

Residues 1-189 are enoyl-CoA hydratase/isomerase; that stretch reads MIYQSPTIEV…NVGAIDALVA (189 aa). Asp-296 is a binding site for substrate. A 3-hydroxyacyl-CoA dehydrogenase region spans residues 311-717; it reads KKVNSAAVLG…ANNGSYYQQA (407 aa). NAD(+)-binding positions include Met-324, Asp-343, 400 to 402, Lys-407, and Ser-429; that span reads VVE. Catalysis depends on His-450, which acts as the For 3-hydroxyacyl-CoA dehydrogenase activity. Asn-453 contacts NAD(+). Asn-500 and Tyr-660 together coordinate substrate.

The protein in the N-terminal section; belongs to the enoyl-CoA hydratase/isomerase family. It in the C-terminal section; belongs to the 3-hydroxyacyl-CoA dehydrogenase family. Heterotetramer of two alpha chains (FadB) and two beta chains (FadA).

It catalyses the reaction a (3S)-3-hydroxyacyl-CoA + NAD(+) = a 3-oxoacyl-CoA + NADH + H(+). The catalysed reaction is a (3S)-3-hydroxyacyl-CoA = a (2E)-enoyl-CoA + H2O. The enzyme catalyses a 4-saturated-(3S)-3-hydroxyacyl-CoA = a (3E)-enoyl-CoA + H2O. It carries out the reaction (3S)-3-hydroxybutanoyl-CoA = (3R)-3-hydroxybutanoyl-CoA. It catalyses the reaction a (3Z)-enoyl-CoA = a 4-saturated (2E)-enoyl-CoA. The catalysed reaction is a (3E)-enoyl-CoA = a 4-saturated (2E)-enoyl-CoA. Its pathway is lipid metabolism; fatty acid beta-oxidation. Involved in the aerobic and anaerobic degradation of long-chain fatty acids via beta-oxidation cycle. Catalyzes the formation of 3-oxoacyl-CoA from enoyl-CoA via L-3-hydroxyacyl-CoA. It can also use D-3-hydroxyacyl-CoA and cis-3-enoyl-CoA as substrate. The protein is Fatty acid oxidation complex subunit alpha of Shewanella piezotolerans (strain WP3 / JCM 13877).